Here is a 246-residue protein sequence, read N- to C-terminus: UDP-N-acetyl-D-mannosaminuronic acid transferase (246 aa).

Belongs to the glycosyltransferase 26 family.

It carries out the reaction UDP-N-acetyl-alpha-D-mannosaminouronate + N-acetyl-alpha-D-glucosaminyl-di-trans,octa-cis-undecaprenyl diphosphate = beta-D-ManNAcA-(1-&gt;4)-alpha-D-GlcNAc-di-trans,octa-cis-undecaprenyl diphosphate + UDP + H(+). Its pathway is bacterial outer membrane biogenesis; enterobacterial common antigen biosynthesis. Its function is as follows. Catalyzes the synthesis of Und-PP-GlcNAc-ManNAcA (Lipid II), the second lipid-linked intermediate involved in enterobacterial common antigen (ECA) synthesis. The chain is UDP-N-acetyl-D-mannosaminuronic acid transferase from Salmonella paratyphi A (strain ATCC 9150 / SARB42).